The primary structure comprises 404 residues: Tryptophan synthase beta chain (404 aa).

The residue at position 98 (lysine 98) is an N6-(pyridoxal phosphate)lysine.

This sequence belongs to the TrpB family. Tetramer of two alpha and two beta chains. It depends on pyridoxal 5'-phosphate as a cofactor.

The catalysed reaction is (1S,2R)-1-C-(indol-3-yl)glycerol 3-phosphate + L-serine = D-glyceraldehyde 3-phosphate + L-tryptophan + H2O. The protein operates within amino-acid biosynthesis; L-tryptophan biosynthesis; L-tryptophan from chorismate: step 5/5. Its function is as follows. The beta subunit is responsible for the synthesis of L-tryptophan from indole and L-serine. The protein is Tryptophan synthase beta chain of Rhodopseudomonas palustris (strain ATCC BAA-98 / CGA009).